Here is a 451-residue protein sequence, read N- to C-terminus: Phosphoglucosamine mutase (451 aa).

The active-site Phosphoserine intermediate is the Ser-107. Mg(2+)-binding residues include Ser-107, Asp-246, Asp-248, and Asp-250. Ser-107 is subject to Phosphoserine.

This sequence belongs to the phosphohexose mutase family. The cofactor is Mg(2+). Post-translationally, activated by phosphorylation.

It catalyses the reaction alpha-D-glucosamine 1-phosphate = D-glucosamine 6-phosphate. Catalyzes the conversion of glucosamine-6-phosphate to glucosamine-1-phosphate. The polypeptide is Phosphoglucosamine mutase (Burkholderia ambifaria (strain ATCC BAA-244 / DSM 16087 / CCUG 44356 / LMG 19182 / AMMD) (Burkholderia cepacia (strain AMMD))).